Reading from the N-terminus, the 476-residue chain is Serine/threonine-protein kinase PknF (476 aa).

Threonine 8 and threonine 13 each carry phosphothreonine; by autocatalysis. The region spanning 12 to 279 is the Protein kinase domain; the sequence is FTIVRQLGSG…FARALGHRLG (268 aa). ATP contacts are provided by residues 18–26 and lysine 41; that span reads LGSGGMGEV. The active-site Proton acceptor is aspartate 137. Threonine 173, threonine 175, and threonine 287 each carry phosphothreonine; by autocatalysis. Serine 290 is subject to Phosphoserine; by autocatalysis. The disordered stretch occupies residues 332 to 376; it reads ADDERAAQPARTRTTTSAGTTTSVAPASTTRPAPTTPTTTGAADT. Residues 338–376 show a composition bias toward low complexity; that stretch reads AQPARTRTTTSAGTTTSVAPASTTRPAPTTPTTTGAADT.

Belongs to the protein kinase superfamily. Ser/Thr protein kinase family. In terms of processing, dephosphorylated by PstP.

It catalyses the reaction L-seryl-[protein] + ATP = O-phospho-L-seryl-[protein] + ADP + H(+). The enzyme catalyses L-threonyl-[protein] + ATP = O-phospho-L-threonyl-[protein] + ADP + H(+). The protein is Serine/threonine-protein kinase PknF (pknF) of Mycobacterium bovis (strain ATCC BAA-935 / AF2122/97).